A 416-amino-acid chain; its full sequence is MFSKSVTLAQYDPDLAAAIAQEDQRQQDHVELIASENYVSCAVMDAQGSQLTNKYAEGYPGKRYYGGCEYVDIVEQLAIDRVKELFGAAYANVQPHSGSQANQAVYASVLKPGDTILGMSLAHGGHLTHGASVNISGKLYNAVTYGLDENEVLDYAEVERLALEHKPKMIVAGASAYALQIDWAKFREIADKVGAYLFVDMAHYAGLVAGGEYPNPVPFCDFVTTTTHKTLRGPRGGVILCRDNTHEKALNSSIFPSLQGGPLMHVIAAKAVAFKEALQPEFKQYAKQVKINAAAMAEELVKRGLRIVSGRTESHVFLVDLQPMKITGKAAEAALGKAHITVNKNAIPNDPEKPFVTSGIRIGSAAMTTRGFNEADARVLANLVADVLSNPEDEANLAKVRKQVTALCNKYPVYGA.

Residues leucine 121 and 125–127 (GHL) contribute to the (6S)-5,6,7,8-tetrahydrofolate site. Lysine 229 bears the N6-(pyridoxal phosphate)lysine mark.

Belongs to the SHMT family. As to quaternary structure, homodimer. Requires pyridoxal 5'-phosphate as cofactor.

It localises to the cytoplasm. It catalyses the reaction (6R)-5,10-methylene-5,6,7,8-tetrahydrofolate + glycine + H2O = (6S)-5,6,7,8-tetrahydrofolate + L-serine. It participates in one-carbon metabolism; tetrahydrofolate interconversion. It functions in the pathway amino-acid biosynthesis; glycine biosynthesis; glycine from L-serine: step 1/1. Functionally, catalyzes the reversible interconversion of serine and glycine with tetrahydrofolate (THF) serving as the one-carbon carrier. This reaction serves as the major source of one-carbon groups required for the biosynthesis of purines, thymidylate, methionine, and other important biomolecules. Also exhibits THF-independent aldolase activity toward beta-hydroxyamino acids, producing glycine and aldehydes, via a retro-aldol mechanism. The protein is Serine hydroxymethyltransferase of Neisseria meningitidis serogroup B (strain ATCC BAA-335 / MC58).